A 278-amino-acid polypeptide reads, in one-letter code: Acyl-[acyl-carrier-protein]--UDP-N-acetylglucosamine O-acyltransferase (278 aa).

Belongs to the transferase hexapeptide repeat family. LpxA subfamily. As to quaternary structure, homotrimer.

It is found in the cytoplasm. It catalyses the reaction a (3R)-hydroxyacyl-[ACP] + UDP-N-acetyl-alpha-D-glucosamine = a UDP-3-O-[(3R)-3-hydroxyacyl]-N-acetyl-alpha-D-glucosamine + holo-[ACP]. It participates in glycolipid biosynthesis; lipid IV(A) biosynthesis; lipid IV(A) from (3R)-3-hydroxytetradecanoyl-[acyl-carrier-protein] and UDP-N-acetyl-alpha-D-glucosamine: step 1/6. Involved in the biosynthesis of lipid A, a phosphorylated glycolipid that anchors the lipopolysaccharide to the outer membrane of the cell. The chain is Acyl-[acyl-carrier-protein]--UDP-N-acetylglucosamine O-acyltransferase from Brucella anthropi (strain ATCC 49188 / DSM 6882 / CCUG 24695 / JCM 21032 / LMG 3331 / NBRC 15819 / NCTC 12168 / Alc 37) (Ochrobactrum anthropi).